Reading from the N-terminus, the 231-residue chain is GDSL lipase Rv0518 (231 aa).

An N-terminal signal peptide occupies residues 1-20 (MSRPGTYVIGLTLLVGLVVG). The active-site Nucleophile is Ser-46. Asp-205 acts as the Proton donor in catalysis. His-208 (proton acceptor) is an active-site residue.

It belongs to the 'GDSL' lipolytic enzyme family.

The protein resides in the secreted. It is found in the cell wall. It localises to the extracellular space. It carries out the reaction a fatty acid ester + H2O = an aliphatic alcohol + a fatty acid + H(+). The catalysed reaction is decanoate ester + H2O = decanoate + an aliphatic alcohol + H(+). The enzyme catalyses an octanoate ester + H2O = an aliphatic alcohol + octanoate + H(+). It catalyses the reaction a dodecanoate ester + H2O = an aliphatic alcohol + dodecanoate + H(+). It carries out the reaction a tetradecanoate ester + H2O = an aliphatic alcohol + tetradecanoate + H(+). Its activity is regulated as follows. Activity is inhibited by the serine modifier phenylmethylsulfonyl fluoride (PMSF). In terms of biological role, GDSL lipase that catalyzes the hydrolysis of p-nitrophenyl (pNP) esters. pNP-decanoate (C10) is the preferred substrate. It can also use pNP-octanoate (C8), pNP-dodecanoate (C12) and pNP-tetradecanoate (C14). Has lower activity with pNP-butyrate (C4), pNP-palmitate (C16) and pNP-stearate (C18). Does not show phospholipase A1 activity. Might help bacteria to utilize available lipids for its growth as well as provide resistance to various intracellular stresses by cell wall modulation resulting in enhanced intracellular survival. In Mycobacterium tuberculosis (strain ATCC 25618 / H37Rv), this protein is GDSL lipase Rv0518.